The chain runs to 152 residues: Superoxide dismutase [Cu-Zn] (152 aa).

Cu cation-binding residues include His-45, His-47, and His-62. Cys-56 and Cys-145 are disulfide-bonded. Positions 62, 70, 79, and 82 each coordinate Zn(2+). His-119 is a binding site for Cu cation.

This sequence belongs to the Cu-Zn superoxide dismutase family. As to quaternary structure, homodimer. The cofactor is Cu cation. Zn(2+) serves as cofactor.

It localises to the cytoplasm. The catalysed reaction is 2 superoxide + 2 H(+) = H2O2 + O2. Its function is as follows. Destroys radicals which are normally produced within the cells and which are toxic to biological systems. This is Superoxide dismutase [Cu-Zn] (SODCC) from Brassica oleracea var. capitata (Cabbage).